The chain runs to 178 residues: Putative pre-16S rRNA nuclease (178 aa).

Over residues methionine 1–arginine 18 the composition is skewed to basic and acidic residues. Residues methionine 1 to arginine 21 are disordered.

This sequence belongs to the YqgF nuclease family.

It localises to the cytoplasm. Its function is as follows. Could be a nuclease involved in processing of the 5'-end of pre-16S rRNA. This chain is Putative pre-16S rRNA nuclease, found in Rhodococcus jostii (strain RHA1).